We begin with the raw amino-acid sequence, 293 residues long: 4-diphosphocytidyl-2-C-methyl-D-erythritol kinase (293 aa).

Residue K16 is part of the active site. Position 99–109 (99–109) interacts with ATP; it reads PMGAGLGGGSS. Residue D141 is part of the active site.

Belongs to the GHMP kinase family. IspE subfamily.

It catalyses the reaction 4-CDP-2-C-methyl-D-erythritol + ATP = 4-CDP-2-C-methyl-D-erythritol 2-phosphate + ADP + H(+). Its pathway is isoprenoid biosynthesis; isopentenyl diphosphate biosynthesis via DXP pathway; isopentenyl diphosphate from 1-deoxy-D-xylulose 5-phosphate: step 3/6. Functionally, catalyzes the phosphorylation of the position 2 hydroxy group of 4-diphosphocytidyl-2C-methyl-D-erythritol. The chain is 4-diphosphocytidyl-2-C-methyl-D-erythritol kinase from Burkholderia pseudomallei (strain 668).